Consider the following 687-residue polypeptide: Probable intron-encoded endonuclease aI3 (687 aa).

Positions 1–374 (MKQMSYVTRW…NASMDVAFHD (374 aa)) are COX1 exons 1 to 3 encoded. 10 helical membrane-spanning segments follow: residues 19-39 (IGMT…GMSV), 69-89 (LLMM…NFFL), 103-123 (LNNI…CSVL), 152-172 (AMFA…NFMV), 188-208 (PLFA…LPVL), 240-260 (LFWF…FGVM), 273-293 (FGEM…FLVW), 315-335 (MVIA…IYGG), 341-361 (VPML…LTGV), and 376-396 (IFIY…NNYT). The COX1 intron 3 encoded stretch occupies residues 375 to 687 (RIFIYYVSFF…KKESLMKFLK (313 aa)).

The protein in the C-terminal section; belongs to the LAGLIDADG endonuclease family. This sequence in the N-terminal section; belongs to the heme-copper respiratory oxidase family. Post-translationally, the mature protein may arise from proteolytic cleavage of an in-frame translation of COX1 exons 1 to 3 plus intron 3, containing the aI3 open reading frame.

Its subcellular location is the mitochondrion. It is found in the membrane. Mitochondrial DNA endonuclease involved in intron homing. The sequence is that of Probable intron-encoded endonuclease aI3 (aI3) from Debaryomyces hansenii (strain ATCC 36239 / CBS 767 / BCRC 21394 / JCM 1990 / NBRC 0083 / IGC 2968) (Yeast).